We begin with the raw amino-acid sequence, 254 residues long: MAEATNQVAVANGHENEDNNDHLIQSSDPQHPANLIPEMCRKFYTWGWVTGTGGGTSIRHGDHIFIAPSGVQKELIQPENMFVMQFPTPKYPPSERKYIRKPKNLKPSDCTPLFLTAFERGAGCCIHTHSQWAVLVTLLVEREYGKEGYFEISNIEQIKGIPKGKGKGMHNYHDTLRIPIIENTPFEEDLTEGLERAINANPDTYAVLVRRHGIYVWGDTPAKAKTQCESLDWLFQLAVEMHKLGLPWDINKTK.

C110 serves as a coordination point for substrate. Residues H127 and H129 each contribute to the Zn(2+) site. E156 acts as the Proton donor/acceptor in catalysis. H212 serves as a coordination point for Zn(2+).

Belongs to the aldolase class II family. MtnB subfamily. It depends on Zn(2+) as a cofactor.

It localises to the cytoplasm. It catalyses the reaction 5-(methylsulfanyl)-D-ribulose 1-phosphate = 5-methylsulfanyl-2,3-dioxopentyl phosphate + H2O. Its pathway is amino-acid biosynthesis; L-methionine biosynthesis via salvage pathway; L-methionine from S-methyl-5-thio-alpha-D-ribose 1-phosphate: step 2/6. Catalyzes the dehydration of methylthioribulose-1-phosphate (MTRu-1-P) into 2,3-diketo-5-methylthiopentyl-1-phosphate (DK-MTP-1-P). This chain is Methylthioribulose-1-phosphate dehydratase, found in Talaromyces marneffei (strain ATCC 18224 / CBS 334.59 / QM 7333) (Penicillium marneffei).